The primary structure comprises 326 residues: Histone-lysine N-methyltransferase Suv4-20 (326 aa).

In terms of domain architecture, SET spans 163-273; the sequence is QECTRYSLEG…AGDEITCFYG (111 aa). Residues 294–313 are disordered; that stretch reads RGKFSTSDEEENDEPSALSE.

Belongs to the class V-like SAM-binding methyltransferase superfamily. Histone-lysine methyltransferase family. Suvar4-20 subfamily.

Its subcellular location is the nucleus. It localises to the chromosome. It catalyses the reaction N(6)-methyl-L-lysyl(20)-[histone H4] + S-adenosyl-L-methionine = N(6),N(6)-dimethyl-L-lysyl(20)-[histone H4] + S-adenosyl-L-homocysteine + H(+). The catalysed reaction is N(6),N(6)-dimethyl-L-lysyl(20)-[histone H4] + S-adenosyl-L-methionine = N(6),N(6),N(6)-trimethyl-L-lysyl(20)-[histone H4] + S-adenosyl-L-homocysteine + H(+). In terms of biological role, histone methyltransferase that specifically di- and trimethylates 'Lys-20' of histone H4 (H4K20me2/me3). H4 'Lys-20' trimethylation represents a specific tag for epigenetic transcriptional repression. Contributes to dosage compensation of X chromosome-relative to autosome-linked gene expression, possibly by converting H4K20me1 to H4K20m2/me3 on autosomes. Involved in the regulation of growth and body fat metabolism downstream of the TOR complex 2 pathway. This is Histone-lysine N-methyltransferase Suv4-20 from Caenorhabditis briggsae.